The primary structure comprises 409 residues: Dihydrolipoyllysine-residue succinyltransferase component of 2-oxoglutarate dehydrogenase complex (409 aa).

Positions 2-77 constitute a Lipoyl-binding domain; sequence AIEILVPDLP…VSKQLLGKIS (76 aa). Lysine 43 bears the N6-lipoyllysine mark. The span at 83–107 shows a compositional bias: polar residues; it reads DVSSATLKATNEPTPSDRQNAAIEN. A disordered region spans residues 83-114; that stretch reads DVSSATLKATNEPTPSDRQNAAIENSHNHNAD. A Peripheral subunit-binding (PSBD) domain is found at 114-151; that stretch reads DQSPVIRRLLAEHDLQADQIQGSGVGGRLTREDIEREI. Residues histidine 380 and aspartate 384 contribute to the active site.

It belongs to the 2-oxoacid dehydrogenase family. As to quaternary structure, forms a 24-polypeptide structural core with octahedral symmetry. Part of the 2-oxoglutarate dehydrogenase (OGDH) complex composed of E1 (2-oxoglutarate dehydrogenase), E2 (dihydrolipoamide succinyltransferase) and E3 (dihydrolipoamide dehydrogenase); the complex contains multiple copies of the three enzymatic components (E1, E2 and E3). Requires (R)-lipoate as cofactor.

It carries out the reaction N(6)-[(R)-dihydrolipoyl]-L-lysyl-[protein] + succinyl-CoA = N(6)-[(R)-S(8)-succinyldihydrolipoyl]-L-lysyl-[protein] + CoA. Its pathway is amino-acid degradation; L-lysine degradation via saccharopine pathway; glutaryl-CoA from L-lysine: step 6/6. Its function is as follows. E2 component of the 2-oxoglutarate dehydrogenase (OGDH) complex which catalyzes the second step in the conversion of 2-oxoglutarate to succinyl-CoA and CO(2). This chain is Dihydrolipoyllysine-residue succinyltransferase component of 2-oxoglutarate dehydrogenase complex (sucB), found in Haemophilus influenzae (strain ATCC 51907 / DSM 11121 / KW20 / Rd).